The sequence spans 305 residues: UDP-3-O-acyl-N-acetylglucosamine deacetylase (305 aa).

3 residues coordinate Zn(2+): His79, His238, and Asp242. His265 acts as the Proton donor in catalysis.

It belongs to the LpxC family. Zn(2+) serves as cofactor.

It catalyses the reaction a UDP-3-O-[(3R)-3-hydroxyacyl]-N-acetyl-alpha-D-glucosamine + H2O = a UDP-3-O-[(3R)-3-hydroxyacyl]-alpha-D-glucosamine + acetate. It functions in the pathway glycolipid biosynthesis; lipid IV(A) biosynthesis; lipid IV(A) from (3R)-3-hydroxytetradecanoyl-[acyl-carrier-protein] and UDP-N-acetyl-alpha-D-glucosamine: step 2/6. Catalyzes the hydrolysis of UDP-3-O-myristoyl-N-acetylglucosamine to form UDP-3-O-myristoylglucosamine and acetate, the committed step in lipid A biosynthesis. This chain is UDP-3-O-acyl-N-acetylglucosamine deacetylase, found in Shigella boydii serotype 18 (strain CDC 3083-94 / BS512).